A 464-amino-acid chain; its full sequence is Kynureninase (464 aa).

The residue at position 1 (M1) is an N-acetylmethionine. Residues L137, T138, F165–D168, S221, D250, H253, and Y275 each bind pyridoxal 5'-phosphate. K276 bears the N6-(pyridoxal phosphate)lysine mark. Pyridoxal 5'-phosphate-binding residues include W305 and N333.

This sequence belongs to the kynureninase family. As to quaternary structure, homodimer. It depends on pyridoxal 5'-phosphate as a cofactor.

It is found in the cytoplasm. It localises to the cytosol. The catalysed reaction is L-kynurenine + H2O = anthranilate + L-alanine + H(+). It carries out the reaction 3-hydroxy-L-kynurenine + H2O = 3-hydroxyanthranilate + L-alanine + H(+). It participates in amino-acid degradation; L-kynurenine degradation; L-alanine and anthranilate from L-kynurenine: step 1/1. It functions in the pathway cofactor biosynthesis; NAD(+) biosynthesis; quinolinate from L-kynurenine: step 2/3. Its function is as follows. Catalyzes the cleavage of L-kynurenine (L-Kyn) and L-3-hydroxykynurenine (L-3OHKyn) into anthranilic acid (AA) and 3-hydroxyanthranilic acid (3-OHAA), respectively. Has a preference for the L-3-hydroxy form. Also has cysteine-conjugate-beta-lyase activity. This Mus musculus (Mouse) protein is Kynureninase (Kynu).